A 350-amino-acid chain; its full sequence is Hydroxymethylglutaryl-CoA synthase (350 aa).

Catalysis depends on E83, which acts as the Proton donor/acceptor. C115 serves as the catalytic Acyl-thioester intermediate. (3S)-3-hydroxy-3-methylglutaryl-CoA contacts are provided by C115 and T156. R204 serves as a coordination point for CoA. T206 and H239 together coordinate (3S)-3-hydroxy-3-methylglutaryl-CoA. The active-site Proton donor/acceptor is H239. K244 is a binding site for CoA. (3S)-3-hydroxy-3-methylglutaryl-CoA-binding residues include N271 and S301.

The protein belongs to the thiolase-like superfamily. Archaeal HMG-CoA synthase family. Interacts with acetoacetyl-CoA thiolase that catalyzes the precedent step in the pathway and with a DUF35 protein. The acetoacetyl-CoA thiolase/HMG-CoA synthase complex channels the intermediate via a fused CoA-binding site, which allows for efficient coupling of the endergonic thiolase reaction with the exergonic HMGCS reaction.

It catalyses the reaction acetoacetyl-CoA + acetyl-CoA + H2O = (3S)-3-hydroxy-3-methylglutaryl-CoA + CoA + H(+). Its pathway is metabolic intermediate biosynthesis; (R)-mevalonate biosynthesis; (R)-mevalonate from acetyl-CoA: step 2/3. Catalyzes the condensation of acetyl-CoA with acetoacetyl-CoA to form 3-hydroxy-3-methylglutaryl-CoA (HMG-CoA). Functions in the mevalonate (MVA) pathway leading to isopentenyl diphosphate (IPP), a key precursor for the biosynthesis of isoprenoid compounds that are building blocks of archaeal membrane lipids. The sequence is that of Hydroxymethylglutaryl-CoA synthase from Thermococcus onnurineus (strain NA1).